The chain runs to 415 residues: Glucose-1-phosphate adenylyltransferase (415 aa).

Residues tyrosine 98, glycine 163, 178 to 179 (EK), and serine 189 each bind alpha-D-glucose 1-phosphate.

The protein belongs to the bacterial/plant glucose-1-phosphate adenylyltransferase family. Homotetramer.

The enzyme catalyses alpha-D-glucose 1-phosphate + ATP + H(+) = ADP-alpha-D-glucose + diphosphate. Its pathway is glycan biosynthesis; glycogen biosynthesis. In terms of biological role, involved in the biosynthesis of ADP-glucose, a building block required for the elongation reactions to produce glycogen. Catalyzes the reaction between ATP and alpha-D-glucose 1-phosphate (G1P) to produce pyrophosphate and ADP-Glc. The sequence is that of Glucose-1-phosphate adenylyltransferase from Fervidobacterium nodosum (strain ATCC 35602 / DSM 5306 / Rt17-B1).